The chain runs to 510 residues: Cytochrome P450 94B1 (510 aa).

The chain crosses the membrane as a helical span at residues 3 to 23 (MLNAIILILFPIIGFVLIFSF). Cys-450 contacts heme.

Belongs to the cytochrome P450 family. Heme serves as cofactor.

It localises to the membrane. The enzyme catalyses a jasmonyl-L-amino acid + reduced [NADPH--hemoprotein reductase] + O2 = a 12-hydroxyjasmonyl-L-alpha-amino acid + oxidized [NADPH--hemoprotein reductase] + H2O + H(+). Hydroxylase involved in the oxidation of the plant hormone jasmonoyl-L-isoleucine (JA-Ile), a bioactive phytohormone of the jasmonate-mediated signaling pathway. Converts JA-Ile to 12-hydroxy-JA-Ile. The sequence is that of Cytochrome P450 94B1 from Arabidopsis thaliana (Mouse-ear cress).